The following is a 750-amino-acid chain: MNRVDTRPPERRTQTISDGELGALVEGRHRDPFAILGPHRDGDTLIVRACVPGAHSVMLADSRGEPLAPMTPLHAGGVFTGRLPAGVSVYQLLVRWHNGTQQVSHDPYAFGLLLGELDLHLIAEGRHFELGACLGAQWRNVDGVQGVRFAVWAPNARRVSVIGDFNGWQPARHPMRLRHPSGVWELFIPEAMGARPGCRYKFDLLDPHDAQLPDKADPLALATEAPPATASVVTQPQVSAPPFAWQDDEWMRLRNAVDPYAAPLSIYEVHVGSWLRAANDPARGWEVLADRLIPYVHELGFTHIELLPVTEHPFGGSWGYQPLSLYAPTARLGPPQAFAAFIDRCHRDGIGVILDWVPAHFPTDPHGLARFDGTALYEHEDPREGFHQDWNTLIYNLGRNEVRGFLLAGALHWLEHFHVDGLRVDAVASMLYRDYSRAPDQWVPNRFGGRENLEAVAFLRELNTVVHERCPGALTIAEESTAWPGVTASAASGGLGFDFKWNMGWMHDTLRYLSLDPIHRAWHHQDMTFGTVYAWSEAFVLPLSHDEVVHGKGSMLRKCPGDDWQRFAGLRAYYGFMWAHPGKKLLFMGGELAQWQEWNHDAELDWALLDHPMHRGVHTLVRDLNALYRELPALHELDHSPAGFQWVVGDDHQNSVFAWLRRPAPGSGDVVLAVTNMTPVPRYGYRIGVPSEGCWHERLNTDAACYGGSNLGNGGAVTAEPVPSHGQEASVLLTLPPLATVILQHAGTQA.

D425 functions as the Nucleophile in the catalytic mechanism. E478 acts as the Proton donor in catalysis.

The protein belongs to the glycosyl hydrolase 13 family. GlgB subfamily. Monomer.

The enzyme catalyses Transfers a segment of a (1-&gt;4)-alpha-D-glucan chain to a primary hydroxy group in a similar glucan chain.. Its pathway is glycan biosynthesis; glycogen biosynthesis. In terms of biological role, catalyzes the formation of the alpha-1,6-glucosidic linkages in glycogen by scission of a 1,4-alpha-linked oligosaccharide from growing alpha-1,4-glucan chains and the subsequent attachment of the oligosaccharide to the alpha-1,6 position. The chain is 1,4-alpha-glucan branching enzyme GlgB from Cupriavidus pinatubonensis (strain JMP 134 / LMG 1197) (Cupriavidus necator (strain JMP 134)).